A 505-amino-acid polypeptide reads, in one-letter code: Folate transporter 1 (505 aa).

A run of 4 helical transmembrane segments spans residues 58–78 (SLIA…IYLL), 89–109 (LSIV…WAVI), 122–142 (YYLL…GLIT), and 146–166 (LFIT…CNVI). N-linked (GlcNAc...) asparagine glycans are attached at residues Asn177, Asn181, and Asn186. The next 2 helical transmembrane spans lie at 192-212 (AFRK…LLLI) and 216-236 (HIFL…FFII). Residue Asn240 is glycosylated (N-linked (GlcNAc...) asparagine). The next 5 helical transmembrane spans lie at 266–286 (IIFI…FFYI), 300–320 (MAMF…LFFT), 326–346 (KLLL…LVVI), 352–372 (FLFI…EFIA), and 405–425 (FASI…NITS). Asn427 is a glycosylation site (N-linked (GlcNAc...) asparagine). The helical transmembrane segment at 431–451 (LPYMIIICCLTNIIPIFFLYI) threads the bilayer. The N-linked (GlcNAc...) asparagine glycan is linked to Asn454.

This sequence belongs to the major facilitator superfamily. Folate-biopterin transporter (TC 2.A.71) family.

It is found in the cell membrane. The enzyme catalyses folate(in) + H(+)(in) = folate(out) + H(+)(out). Its activity is regulated as follows. Transport of folates is inhibited by probenecid and methotrexate. Its function is as follows. Folate transporter with broad substrate specificity. Transports folic acid, folinic acid, pteroic acid, dihydropteroic acid, the folate precursor p-amino benzoic acid (pABA) and the human folate catabolite pABA monoglutamate. This Plasmodium falciparum (isolate 3D7) protein is Folate transporter 1.